Here is a 493-residue protein sequence, read N- to C-terminus: Adenylyltransferase and sulfurtransferase uba4 (493 aa).

ATP contacts are provided by residues G99, D120, 127–131 (SNLHR), K144, and 188–189 (DN). Positions 237 and 240 each coordinate Zn(2+). Residue C254 is the Glycyl thioester intermediate; for adenylyltransferase activity of the active site. C316 and C319 together coordinate Zn(2+). A Rhodanese domain is found at 376 to 491 (INKEPTIIDV…WREQIDPDWP (116 aa)). Residue C446 is the Cysteine persulfide intermediate; for sulfurtransferase activity of the active site.

In the N-terminal section; belongs to the HesA/MoeB/ThiF family. UBA4 subfamily. It depends on Zn(2+) as a cofactor.

The protein localises to the cytoplasm. The protein resides in the cytosol. It carries out the reaction [molybdopterin-synthase sulfur-carrier protein]-C-terminal Gly-Gly + ATP + H(+) = [molybdopterin-synthase sulfur-carrier protein]-C-terminal Gly-Gly-AMP + diphosphate. It catalyses the reaction [molybdopterin-synthase sulfur-carrier protein]-C-terminal Gly-Gly-AMP + S-sulfanyl-L-cysteinyl-[cysteine desulfurase] + AH2 = [molybdopterin-synthase sulfur-carrier protein]-C-terminal-Gly-aminoethanethioate + L-cysteinyl-[cysteine desulfurase] + A + AMP + 2 H(+). It functions in the pathway tRNA modification; 5-methoxycarbonylmethyl-2-thiouridine-tRNA biosynthesis. Its pathway is cofactor biosynthesis; molybdopterin biosynthesis. Its function is as follows. Plays a central role in 2-thiolation of mcm(5)S(2)U at tRNA wobble positions of cytosolic tRNA(Lys), tRNA(Glu) and tRNA(Gln). Also essential during biosynthesis of the molybdenum cofactor. Acts by mediating the C-terminal thiocarboxylation of sulfur carriers urm1 and mocs2a. Its N-terminus first activates urm1 and mocs2a as acyl-adenylates (-COAMP), then the persulfide sulfur on the catalytic cysteine is transferred to urm1 and mocs2a to form thiocarboxylation (-COSH) of their C-terminus. The reaction probably involves hydrogen sulfide that is generated from the persulfide intermediate and that acts as a nucleophile towards urm1 and mocs2a. Subsequently, a transient disulfide bond is formed. Does not use thiosulfate as sulfur donor; nfs1 probably acting as a sulfur donor for thiocarboxylation reactions. The chain is Adenylyltransferase and sulfurtransferase uba4 from Aspergillus fumigatus (strain CBS 144.89 / FGSC A1163 / CEA10) (Neosartorya fumigata).